A 238-amino-acid polypeptide reads, in one-letter code: Dolichyldiphosphatase 1 (238 aa).

The next 4 membrane-spanning stretches (helical) occupy residues 33–53 (LAYL…LIIF), 100–120 (PSSH…FLYL), 130–150 (FLDL…AFLV), and 162–182 (WSQV…WFIF).

This sequence belongs to the dolichyldiphosphatase family.

It is found in the endoplasmic reticulum membrane. It carries out the reaction a di-trans,poly-cis-dolichyl diphosphate + H2O = a di-trans,poly-cis-dolichyl phosphate + phosphate + H(+). It functions in the pathway protein modification; protein glycosylation. Its function is as follows. Required for efficient N-glycosylation. Necessary for maintaining optimal levels of dolichol-linked oligosaccharides. Hydrolyzes dolichyl pyrophosphate at a very high rate and dolichyl monophosphate at a much lower rate. Does not act on phosphatidate. In Callithrix jacchus (White-tufted-ear marmoset), this protein is Dolichyldiphosphatase 1 (DOLPP1).